A 519-amino-acid polypeptide reads, in one-letter code: Glycerophosphoinositol permease 1 (519 aa).

The segment at methionine 1–serine 32 is disordered. The chain crosses the membrane as a helical span at residues leucine 39–isoleucine 59. Residue asparagine 93 is glycosylated (N-linked (GlcNAc...) asparagine). The next 3 helical transmembrane spans lie at alanine 94–glycine 114, tryptophan 117–histidine 137, and valine 141–alanine 161. Asparagine 175 carries an N-linked (GlcNAc...) asparagine glycan. The next 8 membrane-spanning stretches (helical) occupy residues isoleucine 186–isoleucine 206, aspartate 216–phenylalanine 236, valine 273–isoleucine 293, leucine 313–leucine 333, tyrosine 337–tyrosine 357, isoleucine 363–glycine 383, glycine 404–isoleucine 424, and tryptophan 432–isoleucine 452. Acidic residues predominate over residues glutamate 487 to aspartate 500. Residues glutamate 487–lysine 519 are disordered. Residue asparagine 506 is glycosylated (N-linked (GlcNAc...) asparagine). The span at threonine 508–lysine 519 shows a compositional bias: basic and acidic residues.

It belongs to the major facilitator superfamily. Sugar transporter (TC 2.A.1.1) family.

It is found in the cell membrane. The enzyme catalyses sn-glycero-3-phospho-1D-myo-inositol(out) = sn-glycero-3-phospho-1D-myo-inositol(in). In terms of biological role, glycerophosphodiester transporter that mediates uptake of glycerophosphoinositol (GroPIns) as a source of inositol and phosphate. Does not possess detectable glycerophosphocholine (GroPCho) transport activity. Although no glycerophosphoinositol transport activity occurs in the absence of GIT1, C.albicans is still able to use glycerophosphoinositol as a phosphate source at pH 7.5, albeit slowly. Thus, a second, GIT1-independent, mechanism must exist for utilizing glycerophosphoinositol as a phosphate source at physiological pH. The expanded ability to utilize GroPIns and GroPCho results from the organism's pathogenic nature and its need to occupy a variety of environments within its host organism. This possibility is buttressed by the fact that GroPIns and GroPCho are present and abundant in human fluids. The polypeptide is Glycerophosphoinositol permease 1 (Candida albicans (strain SC5314 / ATCC MYA-2876) (Yeast)).